Reading from the N-terminus, the 354-residue chain is GTPase Obg (354 aa).

The region spanning 1–159 (MQFIDHAEIE…KQLRLELKLL (159 aa)) is the Obg domain. Residues 160–328 (AEVGIIGLPN…LLQEIWDVLD (169 aa)) enclose the OBG-type G domain. GTP is bound by residues 166-173 (GLPNAGKS), 191-195 (FTTLI), 213-216 (DIPG), 280-283 (NKLD), and 309-311 (SAV). Residues Ser-173 and Thr-193 each coordinate Mg(2+).

Belongs to the TRAFAC class OBG-HflX-like GTPase superfamily. OBG GTPase family. In terms of assembly, monomer. Mg(2+) is required as a cofactor.

It is found in the cytoplasm. In terms of biological role, an essential GTPase which binds GTP, GDP and possibly (p)ppGpp with moderate affinity, with high nucleotide exchange rates and a fairly low GTP hydrolysis rate. Plays a role in control of the cell cycle, stress response, ribosome biogenesis and in those bacteria that undergo differentiation, in morphogenesis control. This is GTPase Obg from Picosynechococcus sp. (strain ATCC 27264 / PCC 7002 / PR-6) (Agmenellum quadruplicatum).